The primary structure comprises 646 residues: FAD-binding monooxygenase prhK (646 aa).

An N-linked (GlcNAc...) asparagine glycan is attached at Asn-46. Residues 80–97 form a helical membrane-spanning segment; it reads IIIIGAGFGGLLFAVRLI. Residues 119–122, 131–132, and Tyr-137 contribute to the FAD site; these read TWYW and DT. 129–131 is a binding site for NADP(+); sequence MCD. NADP(+)-binding positions include 275–281 and 298–299; these read TGATAIQ and RT. 3 N-linked (GlcNAc...) asparagine glycosylation sites follow: Asn-429, Asn-483, and Asn-529.

It belongs to the FAD-binding monooxygenase family. The cofactor is FAD.

The protein localises to the membrane. The catalysed reaction is preaustinoid A + AH2 + O2 = preaustinoid A1 + A + H2O. Its pathway is secondary metabolite biosynthesis; terpenoid biosynthesis. Functionally, FAD-binding monooxygenase; part of the gene cluster that mediates the biosynthesis of paraherquonin, a meroterpenoid with a unique, highly congested hexacyclic molecular architecture. The first step of the pathway is the synthesis of 3,5-dimethylorsellinic acid (DMOA) by the polyketide synthase prhL. Synthesis of DMOA is followed by farnesylation by the prenyltransferase prhE, methylesterification by the methyl-transferase prhM, epoxidation of the prenyl chain by the flavin-dependent monooxygenase prhF, and cyclization of the farnesyl moiety by the terpene cyclase prhH, to yield the tetracyclic intermediate, protoaustinoid A. The short chain dehydrogenase prhI then oxidizes the C-3 alcohol group of the terpene cyclase product to transform protoaustinoid A into protoaustinoid B. The FAD-binding monooxygenase prhJ catalyzes the oxidation of protoaustinoid B into preaustinoid A which is further oxidized into preaustinoid A1 by FAD-binding monooxygenase phrK. Finally, prhA leads to berkeleydione via the berkeleyone B intermediate. PrhA is a multifunctional dioxygenase that first desaturates at C5-C6 to form berkeleyone B, followed by rearrangement of the A/B-ring to form the cycloheptadiene moiety in berkeleydione. Berkeleydione serves as the key intermediate for the biosynthesis of paraherquonin as well as many other meroterpenoids. The cytochrome P450 monooxygenases prhB, prhD, and prhN, as well as the isomerase prhC, are probably involved in the late stage of paraherquonin biosynthesis, after the production of berkeleydione. Especially prhC might be a multifunctional enzyme that catalyzes the D-ring expansion via intramolecular methoxy rearrangement, as well as the hydrolysis of the expanded D-ring. This is FAD-binding monooxygenase prhK from Penicillium brasilianum.